A 91-amino-acid chain; its full sequence is Putative pterin-4-alpha-carbinolamine dehydratase (91 aa).

This sequence belongs to the pterin-4-alpha-carbinolamine dehydratase family.

The catalysed reaction is (4aS,6R)-4a-hydroxy-L-erythro-5,6,7,8-tetrahydrobiopterin = (6R)-L-erythro-6,7-dihydrobiopterin + H2O. This chain is Putative pterin-4-alpha-carbinolamine dehydratase, found in Sulfolobus acidocaldarius (strain ATCC 33909 / DSM 639 / JCM 8929 / NBRC 15157 / NCIMB 11770).